The sequence spans 298 residues: Cyclin-dependent kinase 2 (298 aa).

N-acetylmethionine is present on M1. A Protein kinase domain is found at 4 to 286 (FQKVEKIGEG…AKAALAHPFF (283 aa)). K6 bears the N6-acetyllysine mark. 10–18 (IGEGTYGVV) contacts ATP. T14 is modified (phosphothreonine). A Phosphotyrosine; by WEE1 modification is found at Y15. Y19 is subject to Phosphotyrosine. ATP contacts are provided by residues K33, 81–83 (EFL), and D86. D127 acts as the Proton acceptor in catalysis. Residues 129 to 132 (KPQN) and D145 contribute to the ATP site. Residues N132 and D145 each coordinate Mg(2+). At T160 the chain carries Phosphothreonine; by CAK and CCRK.

This sequence belongs to the protein kinase superfamily. CMGC Ser/Thr protein kinase family. CDC2/CDKX subfamily. Found in a complex with CABLES1, CCNA1 and CCNE1. Interacts with CABLES1. Interacts with UHRF2. Part of a complex consisting of UHRF2, CDK2 and CCNE1. Interacts with the Speedy/Ringo proteins SPDYA and SPDYC. Interaction with SPDYA promotes kinase activation via a conformation change that alleviates obstruction of the substrate-binding cleft by the T-loop. Found in a complex with both SPDYA and CDKN1B/KIP1. Binds to RB1. Binds to CDK7. Binding to CDKN1A (p21) leads to CDK2/cyclin E inactivation at the G1-S phase DNA damage checkpoint, thereby arresting cells at the G1-S transition during DNA repair. Associated with PTPN6 and beta-catenin/CTNNB1. Interacts with CACUL1. May interact with CEP63. Interacts with ANKRD17. Interacts with CEBPA (when phosphorylated). Forms a ternary complex with CCNA2 and CDKN1B; CDKN1B inhibits the kinase activity of CDK2 through conformational rearrangements. Interacts with cyclins A, B1, B3, D, or E. Interacts with CDK2AP2. Requires Mg(2+) as cofactor. Phosphorylated at Thr-160 by CDK7 in a CAK complex. Phosphorylation at Thr-160 promotes kinase activity, whereas phosphorylation at Tyr-15 by WEE1 reduces slightly kinase activity. Phosphorylated on Thr-14 and Tyr-15 during S and G2 phases before being dephosphorylated by CDC25A. In terms of processing, nitrosylated after treatment with nitric oxide (DETA-NO).

The protein localises to the cytoplasm. Its subcellular location is the cytoskeleton. The protein resides in the microtubule organizing center. It localises to the centrosome. It is found in the nucleus. The protein localises to the cajal body. Its subcellular location is the endosome. It catalyses the reaction L-seryl-[protein] + ATP = O-phospho-L-seryl-[protein] + ADP + H(+). It carries out the reaction L-threonyl-[protein] + ATP = O-phospho-L-threonyl-[protein] + ADP + H(+). Its activity is regulated as follows. Phosphorylation at Thr-14 or Tyr-15 inactivates the enzyme, while phosphorylation at Thr-160 activates it. Stimulated by MYC. Inactivated by CDKN1A (p21). Serine/threonine-protein kinase involved in the control of the cell cycle; essential for meiosis, but dispensable for mitosis. Phosphorylates CABLES1, CTNNB1, CDK2AP2, ERCC6, NBN, USP37, p53/TP53, NPM1, CDK7, RB1, BRCA2, MYC, NPAT, EZH2. Triggers duplication of centrosomes and DNA. Acts at the G1-S transition to promote the E2F transcriptional program and the initiation of DNA synthesis, and modulates G2 progression; controls the timing of entry into mitosis/meiosis by controlling the subsequent activation of cyclin B/CDK1 by phosphorylation, and coordinates the activation of cyclin B/CDK1 at the centrosome and in the nucleus. Crucial role in orchestrating a fine balance between cellular proliferation, cell death, and DNA repair in embryonic stem cells (ESCs). Activity of CDK2 is maximal during S phase and G2; activated by interaction with cyclin E during the early stages of DNA synthesis to permit G1-S transition, and subsequently activated by cyclin A2 (cyclin A1 in germ cells) during the late stages of DNA replication to drive the transition from S phase to mitosis, the G2 phase. EZH2 phosphorylation promotes H3K27me3 maintenance and epigenetic gene silencing. Cyclin E/CDK2 prevents oxidative stress-mediated Ras-induced senescence by phosphorylating MYC. Involved in G1-S phase DNA damage checkpoint that prevents cells with damaged DNA from initiating mitosis; regulates homologous recombination-dependent repair by phosphorylating BRCA2, this phosphorylation is low in S phase when recombination is active, but increases as cells progress towards mitosis. In response to DNA damage, double-strand break repair by homologous recombination a reduction of CDK2-mediated BRCA2 phosphorylation. Involved in regulation of telomere repair by mediating phosphorylation of NBN. Phosphorylation of RB1 disturbs its interaction with E2F1. NPM1 phosphorylation by cyclin E/CDK2 promotes its dissociation from unduplicated centrosomes, thus initiating centrosome duplication. Cyclin E/CDK2-mediated phosphorylation of NPAT at G1-S transition and until prophase stimulates the NPAT-mediated activation of histone gene transcription during S phase. Required for vitamin D-mediated growth inhibition by being itself inactivated. Involved in the nitric oxide- (NO) mediated signaling in a nitrosylation/activation-dependent manner. USP37 is activated by phosphorylation and thus triggers G1-S transition. CTNNB1 phosphorylation regulates insulin internalization. Phosphorylates FOXP3 and negatively regulates its transcriptional activity and protein stability. Phosphorylates ERCC6 which is essential for its chromatin remodeling activity at DNA double-strand breaks. Acts as a regulator of the phosphatidylinositol 3-kinase/protein kinase B signal transduction by mediating phosphorylation of the C-terminus of protein kinase B (PKB/AKT1 and PKB/AKT2), promoting its activation. In Rattus norvegicus (Rat), this protein is Cyclin-dependent kinase 2 (Cdk2).